Reading from the N-terminus, the 311-residue chain is Triacylglycerol lipase (311 aa).

The N-terminal stretch at Met-1–Ala-26 is a signal peptide. Positions Pro-35–Glu-280 constitute an AB hydrolase-1 domain. Met-42 contacts substrate. Ser-108 functions as the Nucleophile in the catalytic mechanism. His-109 contributes to the substrate binding site. Cys-209 and Cys-261 form a disulfide bridge. A Ca(2+)-binding site is contributed by Asp-235. Catalysis depends on charge relay system residues Asp-255 and His-277. Asp-279, Gln-283, and Leu-287 together coordinate Ca(2+).

It belongs to the AB hydrolase superfamily. Pseudomonas lipase family. As to quaternary structure, monomer. The cofactor is Ca(2+).

Its subcellular location is the secreted. It carries out the reaction a triacylglycerol + H2O = a diacylglycerol + a fatty acid + H(+). In terms of biological role, catalyzes the hydrolysis of triacylglycerol. Also able to catalyze, in anhydrous organic solvents, intramolecular transesterification of omega-hydroxyfatty acid esters to form macrocyclic lactones. This biosynthesis is dependent on the chain length of the substrates, and the formation of monomer lactone is maximum with methyl 18-hydroxyoctadecanoate. With shorter substrates, monomer lactone decreases and the formation of diolide (dimer lactone) increases. This is Triacylglycerol lipase from Pseudomonas sp. (strain 109).